A 227-amino-acid chain; its full sequence is MGGTASTRRVTFEADENENITVVKGIRLSENVIDRMKESSPSGSKSQRYSSVYGASVSDEDLKRRVAEELALEQAKKESEHQRRLKQARDLERERAAANEQLTRAVLRERISSEEERMKAKHLARQLEEKDRVMRKQDAFYKEQLARLEERSSEFYKVTTEEYQKAAEEVEAKFKRYEYHPVCADLQTKILQCYRQNTQQTLSCSALASQYMHCVNHAKQSMLEKGG.

Glycine 2 carries the N-myristoyl glycine lipid modification. Position 29 is a phosphoserine (serine 29). The disordered stretch occupies residues 32–57; sequence VIDRMKESSPSGSKSQRYSSVYGASV. The span at 39–50 shows a compositional bias: polar residues; that stretch reads SSPSGSKSQRYS. Tyrosine 49 carries the post-translational modification Phosphotyrosine. Phosphoserine occurs at positions 50, 51, 56, and 58. The tract at residues 73–92 is disordered; sequence EQAKKESEHQRRLKQARDLE. An N6-acetyllysine modification is found at lysine 142. The region spanning 180–222 is the CHCH domain; sequence HPVCADLQTKILQCYRQNTQQTLSCSALASQYMHCVNHAKQSM. 2 short sequence motifs (cx9C motif) span residues 183–193 and 204–214; these read CADLQTKILQC and CSALASQYMHC. 2 disulfides stabilise this stretch: cysteine 183/cysteine 214 and cysteine 193/cysteine 204.

Belongs to the MICOS complex subunit Mic19 family. Metazoan Mic19 subfamily. Component of the mitochondrial contact site and cristae organizing system (MICOS) complex, composed of at least MICOS10/MIC10, CHCHD3/MIC19, CHCHD6/MIC25, APOOL/MIC27, IMMT/MIC60, APOO/MIC23/MIC26 and MICOS13/MIC13. This complex was also known under the names MINOS or MitOS complex. The MICOS complex associates with mitochondrial outer membrane proteins SAMM50, MTX1 and MTX2 (together described as components of the mitochondrial outer membrane sorting assembly machinery (SAM) complex) and DNAJC11, mitochondrial inner membrane protein TMEM11 and with HSPA9. The MICOS and SAM complexes together with DNAJC11 are part of a large protein complex spanning both membranes termed the mitochondrial intermembrane space bridging (MIB) complex. Interacts with HSPA1A/HSPA1B and OPA1, preferentially with the soluble OPA1 form.

The protein localises to the mitochondrion inner membrane. It is found in the cytoplasm. It localises to the nucleus. Its subcellular location is the mitochondrion. Component of the MICOS complex, a large protein complex of the mitochondrial inner membrane that plays crucial roles in the maintenance of crista junctions, inner membrane architecture, and formation of contact sites to the outer membrane. Has also been shown to function as a transcription factor which binds to the BAG1 promoter and represses BAG1 transcription. Plays an important role in the maintenance of the MICOS complex stability and the mitochondrial cristae morphology. In Mus musculus (Mouse), this protein is MICOS complex subunit Mic19 (Chchd3).